The primary structure comprises 735 residues: DNA replication licensing factor mcm5-A (735 aa).

The MCM domain maps to 332–538 (IYETVAKSIA…RDMTLAKHVM (207 aa)). Arg-372 lines the ADP pocket. Residues 513–516 (SRFD) carry the Arginine finger motif.

Belongs to the MCM family. In terms of assembly, component of the mcm2-7 complex (RLF-M). The complex forms a toroidal hexameric ring with the proposed subunit order mcm2-mcm6-mcm4-mcm7-mcm3-mcm5. The heterodimer of mmcm3/mcm5 interacts with mcm4, mmcm6, mcm7 and weakly with mcm2. Component of the CMG helicase complex, composed of the mcm2-7 complex, the GINS complex and cdc45.

The protein resides in the nucleus. It is found in the chromosome. It carries out the reaction ATP + H2O = ADP + phosphate + H(+). In terms of biological role, acts as a component of the MCM2-7 complex (MCM complex) which is the replicative helicase essential for 'once per cell cycle' DNA replication initiation and elongation in eukaryotic cells. Core component of CDC45-MCM-GINS (CMG) helicase, the molecular machine that unwinds template DNA during replication, and around which the replisome is built. The active ATPase sites in the MCM2-7 ring are formed through the interaction surfaces of two neighboring subunits such that a critical structure of a conserved arginine finger motif is provided in trans relative to the ATP-binding site of the Walker A box of the adjacent subunit. The six ATPase active sites, however, are likely to contribute differentially to the complex helicase activity. This Xenopus laevis (African clawed frog) protein is DNA replication licensing factor mcm5-A (mcm5-a).